Here is a 163-residue protein sequence, read N- to C-terminus: Large ribosomal subunit protein uL13m (163 aa).

N-acetylserine is present on Ser2. A propeptide spanning residues 2-4 (SQK) is cleaved from the precursor.

This sequence belongs to the universal ribosomal protein uL13 family. In terms of assembly, component of the mitochondrial large ribosomal subunit (mt-LSU). Mature yeast 74S mitochondrial ribosomes consist of a small (37S) and a large (54S) subunit. The 37S small subunit contains a 15S ribosomal RNA (15S mt-rRNA) and 34 different proteins. The 54S large subunit contains a 21S rRNA (21S mt-rRNA) and 46 different proteins.

The protein resides in the mitochondrion. Component of the mitochondrial ribosome (mitoribosome), a dedicated translation machinery responsible for the synthesis of mitochondrial genome-encoded proteins, including at least some of the essential transmembrane subunits of the mitochondrial respiratory chain. The mitoribosomes are attached to the mitochondrial inner membrane and translation products are cotranslationally integrated into the membrane. This Saccharomyces cerevisiae (strain ATCC 204508 / S288c) (Baker's yeast) protein is Large ribosomal subunit protein uL13m (MRPL23).